The following is a 122-amino-acid chain: Small ribosomal subunit protein uS13 (122 aa).

Residues 99 to 122 (RGQRTHTNARTRKGPAKAIAGKKK) are disordered.

It belongs to the universal ribosomal protein uS13 family. Part of the 30S ribosomal subunit. Forms a loose heterodimer with protein S19. Forms two bridges to the 50S subunit in the 70S ribosome.

Its function is as follows. Located at the top of the head of the 30S subunit, it contacts several helices of the 16S rRNA. In the 70S ribosome it contacts the 23S rRNA (bridge B1a) and protein L5 of the 50S subunit (bridge B1b), connecting the 2 subunits; these bridges are implicated in subunit movement. Contacts the tRNAs in the A and P-sites. The protein is Small ribosomal subunit protein uS13 of Rhodopseudomonas palustris (strain TIE-1).